Here is a 430-residue protein sequence, read N- to C-terminus: Adenylosuccinate synthetase (430 aa).

GTP-binding positions include 12-18 and 40-42; these read GDEGKGK and GHT. Asp13 acts as the Proton acceptor in catalysis. The Mg(2+) site is built by Asp13 and Gly40. IMP contacts are provided by residues 13–16, 38–41, Thr130, Arg144, Gln224, Thr239, and Arg303; these read DEGK and NAGH. Residue His41 is the Proton donor of the active site. A substrate-binding site is contributed by 299 to 305; that stretch reads TVTSRKR. Residues Arg305, 331–333, and 413–415 each bind GTP; these read KLD and STS.

It belongs to the adenylosuccinate synthetase family. Homodimer. Mg(2+) serves as cofactor.

It localises to the cytoplasm. The enzyme catalyses IMP + L-aspartate + GTP = N(6)-(1,2-dicarboxyethyl)-AMP + GDP + phosphate + 2 H(+). It participates in purine metabolism; AMP biosynthesis via de novo pathway; AMP from IMP: step 1/2. Its function is as follows. Plays an important role in the de novo pathway of purine nucleotide biosynthesis. Catalyzes the first committed step in the biosynthesis of AMP from IMP. The polypeptide is Adenylosuccinate synthetase (Pelagibacter ubique (strain HTCC1062)).